The sequence spans 372 residues: Putative actin-27 (372 aa).

It belongs to the actin family.

The protein resides in the cytoplasm. Its subcellular location is the cytoskeleton. It carries out the reaction ATP + H2O = ADP + phosphate + H(+). Its function is as follows. Actins are highly conserved proteins that are involved in various types of cell motility and are ubiquitously expressed in all eukaryotic cells. Multiple isoforms are involved in various cellular functions such as cytoskeleton structure, cell mobility, chromosome movement and muscle contraction. This chain is Putative actin-27 (act27), found in Dictyostelium discoideum (Social amoeba).